The sequence spans 195 residues: dCTP deaminase, dUMP-forming (195 aa).

DCTP is bound by residues 105-110 (RSSLGR), D123, 131-133 (TLE), Q152, Y166, K173, and Q177. Residue E133 is the Proton donor/acceptor of the active site. The segment at 161–195 (PADRPYGDERGSKYQDQDGPQASRIRGDREFGGTQ) is disordered. The segment covering 165–176 (PYGDERGSKYQD) has biased composition (basic and acidic residues). The segment covering 185 to 195 (IRGDREFGGTQ) has biased composition (basic and acidic residues).

This sequence belongs to the dCTP deaminase family. As to quaternary structure, homotrimer.

The enzyme catalyses dCTP + 2 H2O = dUMP + NH4(+) + diphosphate. The protein operates within pyrimidine metabolism; dUMP biosynthesis; dUMP from dCTP: step 1/1. Its function is as follows. Bifunctional enzyme that catalyzes both the deamination of dCTP to dUTP and the hydrolysis of dUTP to dUMP without releasing the toxic dUTP intermediate. The sequence is that of dCTP deaminase, dUMP-forming from Halobacterium salinarum (strain ATCC 700922 / JCM 11081 / NRC-1) (Halobacterium halobium).